A 75-amino-acid polypeptide reads, in one-letter code: Small ribosomal subunit protein bS18 (75 aa).

It belongs to the bacterial ribosomal protein bS18 family. In terms of assembly, part of the 30S ribosomal subunit. Forms a tight heterodimer with protein bS6.

Functionally, binds as a heterodimer with protein bS6 to the central domain of the 16S rRNA, where it helps stabilize the platform of the 30S subunit. The sequence is that of Small ribosomal subunit protein bS18 from Colwellia psychrerythraea (strain 34H / ATCC BAA-681) (Vibrio psychroerythus).